We begin with the raw amino-acid sequence, 217 residues long: Octanoyltransferase (217 aa).

A BPL/LPL catalytic domain is found at 32–207; the sequence is DDSADEIWLV…HMIKKLNATQ (176 aa). Substrate is bound by residues 71–78, 138–140, and 151–153; these read RGGQVTYH, SLG, and GLA. Residue cysteine 169 is the Acyl-thioester intermediate of the active site.

The protein belongs to the LipB family.

The protein resides in the cytoplasm. It carries out the reaction octanoyl-[ACP] + L-lysyl-[protein] = N(6)-octanoyl-L-lysyl-[protein] + holo-[ACP] + H(+). It functions in the pathway protein modification; protein lipoylation via endogenous pathway; protein N(6)-(lipoyl)lysine from octanoyl-[acyl-carrier-protein]: step 1/2. Catalyzes the transfer of endogenously produced octanoic acid from octanoyl-acyl-carrier-protein onto the lipoyl domains of lipoate-dependent enzymes. Lipoyl-ACP can also act as a substrate although octanoyl-ACP is likely to be the physiological substrate. In Pseudoalteromonas translucida (strain TAC 125), this protein is Octanoyltransferase.